We begin with the raw amino-acid sequence, 127 residues long: Holo-[acyl-carrier-protein] synthase (127 aa).

Mg(2+)-binding residues include aspartate 9 and glutamate 58.

Belongs to the P-Pant transferase superfamily. AcpS family. Mg(2+) is required as a cofactor.

The protein resides in the cytoplasm. It catalyses the reaction apo-[ACP] + CoA = holo-[ACP] + adenosine 3',5'-bisphosphate + H(+). Its function is as follows. Transfers the 4'-phosphopantetheine moiety from coenzyme A to a Ser of acyl-carrier-protein. The chain is Holo-[acyl-carrier-protein] synthase from Shewanella sp. (strain MR-7).